A 356-amino-acid polypeptide reads, in one-letter code: Phosphate acyltransferase (356 aa).

It belongs to the PlsX family. As to quaternary structure, homodimer. Probably interacts with PlsY.

It is found in the cytoplasm. The enzyme catalyses a fatty acyl-[ACP] + phosphate = an acyl phosphate + holo-[ACP]. It functions in the pathway lipid metabolism; phospholipid metabolism. Functionally, catalyzes the reversible formation of acyl-phosphate (acyl-PO(4)) from acyl-[acyl-carrier-protein] (acyl-ACP). This enzyme utilizes acyl-ACP as fatty acyl donor, but not acyl-CoA. This is Phosphate acyltransferase from Escherichia coli (strain K12 / DH10B).